Here is an 81-residue protein sequence, read N- to C-terminus: Putative membrane protein insertion efficiency factor (81 aa).

A disordered region spans residues 60–81 (WNPGGYDPVPTHNTSNSSPMAE). Over residues 70–81 (THNTSNSSPMAE) the composition is skewed to polar residues.

It belongs to the UPF0161 family.

The protein localises to the cell inner membrane. Its function is as follows. Could be involved in insertion of integral membrane proteins into the membrane. In Stutzerimonas stutzeri (strain A1501) (Pseudomonas stutzeri), this protein is Putative membrane protein insertion efficiency factor.